The following is a 155-amino-acid chain: Small ribosomal subunit protein uS7c (155 aa).

This sequence belongs to the universal ribosomal protein uS7 family. In terms of assembly, part of the 30S ribosomal subunit.

It is found in the plastid. It localises to the chloroplast. Its function is as follows. One of the primary rRNA binding proteins, it binds directly to 16S rRNA where it nucleates assembly of the head domain of the 30S subunit. This is Small ribosomal subunit protein uS7c (rps7) from Metasequoia glyptostroboides (Dawn redwood).